We begin with the raw amino-acid sequence, 542 residues long: CTP synthase (542 aa).

Residues 1-265 (MTRYIFVTGG…DDIVVERFGL (265 aa)) are amidoligase domain. Position 13 (Ser13) interacts with CTP. Ser13 is a UTP binding site. ATP-binding positions include 14 to 19 (SLGKGI) and Asp71. 2 residues coordinate Mg(2+): Asp71 and Glu139. Residues 146 to 148 (DIE), 186 to 191 (KTKPTQ), and Lys222 contribute to the CTP site. Residues 186-191 (KTKPTQ) and Lys222 each bind UTP. The region spanning 290–541 (TIAMVGKYME…VNAALKYSGK (252 aa)) is the Glutamine amidotransferase type-1 domain. Gly351 contributes to the L-glutamine binding site. Cys378 functions as the Nucleophile; for glutamine hydrolysis in the catalytic mechanism. Residues 379–382 (LGMQ), Glu402, and Arg469 contribute to the L-glutamine site. Residues His514 and Glu516 contribute to the active site.

This sequence belongs to the CTP synthase family. As to quaternary structure, homotetramer.

It carries out the reaction UTP + L-glutamine + ATP + H2O = CTP + L-glutamate + ADP + phosphate + 2 H(+). It catalyses the reaction L-glutamine + H2O = L-glutamate + NH4(+). The catalysed reaction is UTP + NH4(+) + ATP = CTP + ADP + phosphate + 2 H(+). Its pathway is pyrimidine metabolism; CTP biosynthesis via de novo pathway; CTP from UDP: step 2/2. Allosterically activated by GTP, when glutamine is the substrate; GTP has no effect on the reaction when ammonia is the substrate. The allosteric effector GTP functions by stabilizing the protein conformation that binds the tetrahedral intermediate(s) formed during glutamine hydrolysis. Inhibited by the product CTP, via allosteric rather than competitive inhibition. Its function is as follows. Catalyzes the ATP-dependent amination of UTP to CTP with either L-glutamine or ammonia as the source of nitrogen. Regulates intracellular CTP levels through interactions with the four ribonucleotide triphosphates. The protein is CTP synthase of Pseudomonas aeruginosa (strain LESB58).